We begin with the raw amino-acid sequence, 528 residues long: 3-ketoacyl-CoA synthase 2 (528 aa).

A run of 2 helical transmembrane segments spans residues 36–56 and 78–98; these read LGYHYLISNAVYILILPVGLL and FHFLSSTLFAALLIFLTTLYF. The FAE domain occupies 97-388; that stretch reads YFTTRPRRIF…FFATLVARKV (292 aa). Active-site residues include C241, H320, H407, H411, and N444.

The protein belongs to the thiolase-like superfamily. Chalcone/stilbene synthases family. As to expression, expressed in siliques, flowers and stems. In young seedlings, expressed in the central cylinder of primary roots, in emerging lateral roots and in their root cap, but not in aboveground tissues such as hypocotyls, cotyledons and leaves. Expressed in sepals in mature flowers and in the chalaza and micropyle region of developing seeds shortly prior to or just after the detachment from the funiculus. Expressed in roots, flowers, cauline leaves and siliques.

It localises to the membrane. It catalyses the reaction a very-long-chain acyl-CoA + malonyl-CoA + H(+) = a very-long-chain 3-oxoacyl-CoA + CO2 + CoA. It participates in lipid metabolism; fatty acid biosynthesis. Its activity is regulated as follows. Inhibited by K3 herbicides such as allidochlor, anilofos, cafenstrole and flufenacet. Strongly inhibited by metazachlor. Functionally, mediates the synthesis of VLCFAs from 22 to 26 carbons in length (e.g. C22, C24, C26). Involved in the elongation of C20 fatty acid suberin precursors. Functionally redundant with KCS20 in the two-carbon elongation of C22 fatty acids that is required for cuticular wax and root suberin biosynthesis. This chain is 3-ketoacyl-CoA synthase 2, found in Arabidopsis thaliana (Mouse-ear cress).